We begin with the raw amino-acid sequence, 389 residues long: RHOMBOID-like protein 1 (389 aa).

7 helical membrane-spanning segments follow: residues 56–76 (PWLV…SMFI), 136–156 (IWLH…IFIG), 163–183 (FGFV…SLLS), 191–211 (ISVG…SELL), 221–241 (FAAL…GILP), 244–264 (DNFA…VFLI), and 295–315 (VLWI…LVVL). Catalysis depends on serine 196, which acts as the Nucleophile. The active-site Charge relay system is the histidine 248.

It belongs to the peptidase S54 family. As to expression, expressed in roots, seedlings, leaves, stems and flowers.

It localises to the golgi apparatus membrane. It carries out the reaction Cleaves type-1 transmembrane domains using a catalytic dyad composed of serine and histidine that are contributed by different transmembrane domains.. Functionally, probable rhomboid-type serine protease that catalyzes intramembrane proteolysis. Unable to cleave the Drosophila protein Spitz. This is RHOMBOID-like protein 1 from Arabidopsis thaliana (Mouse-ear cress).